The following is a 363-amino-acid chain: 3-dehydroquinate synthase (363 aa).

NAD(+)-binding positions include 72 to 77 (SGEKEK), 130 to 131 (TT), Lys142, and Lys151. Positions 184, 247, and 264 each coordinate Zn(2+).

This sequence belongs to the sugar phosphate cyclases superfamily. Dehydroquinate synthase family. Co(2+) serves as cofactor. Requires Zn(2+) as cofactor. NAD(+) is required as a cofactor.

It localises to the cytoplasm. The catalysed reaction is 7-phospho-2-dehydro-3-deoxy-D-arabino-heptonate = 3-dehydroquinate + phosphate. The protein operates within metabolic intermediate biosynthesis; chorismate biosynthesis; chorismate from D-erythrose 4-phosphate and phosphoenolpyruvate: step 2/7. Catalyzes the conversion of 3-deoxy-D-arabino-heptulosonate 7-phosphate (DAHP) to dehydroquinate (DHQ). In Bacillus thuringiensis subsp. konkukian (strain 97-27), this protein is 3-dehydroquinate synthase.